The sequence spans 130 residues: Small ribosomal subunit protein uS8 (130 aa).

This sequence belongs to the universal ribosomal protein uS8 family. In terms of assembly, part of the 30S ribosomal subunit.

Functionally, one of the primary rRNA binding proteins, it binds directly to 16S rRNA central domain where it helps coordinate assembly of the platform of the 30S subunit. The protein is Small ribosomal subunit protein uS8 of Cenarchaeum symbiosum (strain A).